The following is a 239-amino-acid chain: Orotidine 5'-phosphate decarboxylase (239 aa).

Residues Asp11, Lys33, 60–69 (DLKCHDIPTT), Thr123, Arg185, Gln194, Gly214, and Arg215 contribute to the substrate site. Catalysis depends on Lys62, which acts as the Proton donor.

This sequence belongs to the OMP decarboxylase family. Type 1 subfamily. In terms of assembly, homodimer.

The catalysed reaction is orotidine 5'-phosphate + H(+) = UMP + CO2. Its pathway is pyrimidine metabolism; UMP biosynthesis via de novo pathway; UMP from orotate: step 2/2. Functionally, catalyzes the decarboxylation of orotidine 5'-monophosphate (OMP) to uridine 5'-monophosphate (UMP). The sequence is that of Orotidine 5'-phosphate decarboxylase from Bacillus licheniformis (strain ATCC 14580 / DSM 13 / JCM 2505 / CCUG 7422 / NBRC 12200 / NCIMB 9375 / NCTC 10341 / NRRL NRS-1264 / Gibson 46).